We begin with the raw amino-acid sequence, 535 residues long: Isoleucine N-monooxygenase 1 (535 aa).

The Cytoplasmic portion of the chain corresponds to 1–8 (MGLMPDFL). Residues 9–29 (SLCHEFPWTFLLVVIFSFMIF) form a helical; Signal-anchor for type II membrane protein membrane-spanning segment. The Lumenal segment spans residues 30–535 (KVTKTHLVNK…AAELYRTNEI (506 aa)). N38, N232, and N404 each carry an N-linked (GlcNAc...) asparagine glycan. Residue C470 coordinates heme.

Belongs to the cytochrome P450 family. The cofactor is heme. Exclusively expressed in aerial parts. Highest expression in the apical leaves. Also detected in the second leaf from the top and in the stem. Not expressed in older leaves or roots.

The protein localises to the microsome membrane. It carries out the reaction L-isoleucine + 2 reduced [NADPH--hemoprotein reductase] + 2 O2 = (1E,2S)-2-methylbutanal oxime + 2 oxidized [NADPH--hemoprotein reductase] + CO2 + 3 H2O + 2 H(+). The enzyme catalyses L-isoleucine + reduced [NADPH--hemoprotein reductase] + O2 = N-hydroxy-L-isoleucine + oxidized [NADPH--hemoprotein reductase] + H2O + 2 H(+). It catalyses the reaction N-hydroxy-L-isoleucine + reduced [NADPH--hemoprotein reductase] + O2 = N,N-dihydroxy-L-isoleucine + oxidized [NADPH--hemoprotein reductase] + H2O + H(+). The catalysed reaction is L-valine + 2 reduced [NADPH--hemoprotein reductase] + 2 O2 = (E)-2-methylpropanal oxime + 2 oxidized [NADPH--hemoprotein reductase] + CO2 + 3 H2O + 2 H(+). It carries out the reaction L-valine + reduced [NADPH--hemoprotein reductase] + O2 = N-hydroxy-L-valine + oxidized [NADPH--hemoprotein reductase] + H2O + 2 H(+). The enzyme catalyses N-hydroxy-L-valine + reduced [NADPH--hemoprotein reductase] + O2 = N,N-dihydroxy-L-valine + oxidized [NADPH--hemoprotein reductase] + H2O + H(+). The protein operates within secondary metabolite biosynthesis. Its function is as follows. Involved in the biosynthesis of the cyanogenic glucosides linamarin and lotaustralin and of the nitirle glucosides rhodiocyanoside A and D. Can use L-isoleucine &gt; L-valine as substrate, but not L-leucine, L-phenylalanine or L-tyrosine. Catalyzes multi-step reactions starting with two successive N-hydroxylations using L-isoleucine and, to a lower extent, L-valine as substrates leading to the formation of N,N-dihydroxy-L-valine and N,N-dihydroxy-L-isoleucine, respectively; following spontaneous reactions lead to the production of (E)-2-methylpropanal oxime and (1E,2S)-2-methylbutanal oxime, respectively. This Lotus japonicus (Lotus corniculatus var. japonicus) protein is Isoleucine N-monooxygenase 1.